Reading from the N-terminus, the 156-residue chain is MSLLIDFIDETEEVKDEYISLIRGLVEKAAQMENIEEGAELSVTFVDNERIREINRDYRDKDQPTDVISFAMEEMGEGEMEIVGAEMPRMLGDLIISIPRAKEQAEEYGHSFDRELGFLALHGFLHLLGYDHMTEEDEKEMFGRQKEILEAFGLGR.

Zn(2+) contacts are provided by H122, H126, and H132.

It belongs to the endoribonuclease YbeY family. Zn(2+) is required as a cofactor.

It localises to the cytoplasm. In terms of biological role, single strand-specific metallo-endoribonuclease involved in late-stage 70S ribosome quality control and in maturation of the 3' terminus of the 16S rRNA. This chain is Endoribonuclease YbeY, found in Bacillus mycoides (strain KBAB4) (Bacillus weihenstephanensis).